The following is a 106-amino-acid chain: MIAPAVLRALRKNKTLRYGVPMLLLVVGGSFGLREFSQIRYDAVTIKIDPELEKKLKVNKITLESEYEKIKDSTFENWKNIRGPRPWEDPQLLQGRNPETLKPKTT.

Topologically, residues 1 to 15 (MIAPAVLRALRKNKT) are mitochondrial matrix. Residues 16–33 (LRYGVPMLLLVVGGSFGL) traverse the membrane as a helical segment. Residues 34-106 (REFSQIRYDA…NPETLKPKTT (73 aa)) lie on the Mitochondrial intermembrane side of the membrane. Residues 81–106 (IRGPRPWEDPQLLQGRNPETLKPKTT) form a disordered region.

This sequence belongs to the COX16 family. In terms of assembly, associates with the MITRAC complex. Interacts with MT-CO2/COX; specifically interacts with newly synthesized MT-CO2/COX. Interacts with SCO1, SCO2 and COA6.

The protein localises to the mitochondrion inner membrane. Its function is as follows. Required for the assembly of the mitochondrial respiratory chain complex IV (CIV), also known as cytochrome c oxidase. Promotes the insertion of copper into the active site of cytochrome c oxidase subunit II (MT-CO2/COX2). Interacts specifically with newly synthesized MT-CO2/COX and its copper center-forming metallochaperones SCO1, SCO2 and COA6. Probably facilitates MT-CO2/COX2 association with the MITRAC assembly intermediate containing MT-CO1/COX1, thereby participating in merging the MT-CO1/COX1 and MT-CO2/COX2 assembly lines. This is Cytochrome c oxidase assembly protein COX16 homolog, mitochondrial from Mus musculus (Mouse).